The sequence spans 346 residues: LRP2-binding protein (346 aa).

Residues 58–91 form a TPR repeat; sequence AMAYFLRGQLYFEEGWYEEALAQFEEIQEKDHQA. Sel1-like repeat units lie at residues 92–124, 132–167, 172–205, 206–241, 242–276, and 296–331; these read IYQL…DSSC, FAAA…DNGN, VKAQ…GNGN, LESQ…ERGN, VYAQ…EVHD, and AMAS…RLNP.

Interacts with LRP2.

It localises to the cytoplasm. In terms of biological role, may act as an adapter that regulates LRP2 function. The sequence is that of LRP2-binding protein (Lrp2bp) from Rattus norvegicus (Rat).